We begin with the raw amino-acid sequence, 2327 residues long: Chondroitin sulfate proteoglycan 4 (2327 aa).

Residues 1–29 (MLLGPGHPLSAPALALALTLALLVRSTAP) form the signal peptide. 2 consecutive Laminin G-like domains span residues 30–193 (ASFF…HEGC) and 203–381 (VGLG…SAGC). Residues 30–640 (ASFFGENHLE…HRGGPAQDLT (611 aa)) are globular or compact configuration stabilized by disulfide bonds. The interval 30–640 (ASFFGENHLE…HRGGPAQDLT (611 aa)) is neurite growth inhibition. Residues 30 to 2229 (ASFFGENHLE…LGFLEANMFS (2200 aa)) lie on the Extracellular side of the membrane. Asn-130 is a glycosylation site (N-linked (GlcNAc...) asparagine). A disulfide bridge connects residues Cys-170 and Cys-193. N-linked (GlcNAc...) asparagine glycosylation is present at Asn-349. Cys-355 and Cys-381 are disulfide-bonded. N-linked (GlcNAc...) asparagine glycosylation occurs at Asn-428. 3 CSPG repeats span residues 429–524 (FTQL…LEVS), 554–646 (PRII…VSDG), and 663–765 (AIQI…LEVQ). Residues 575–1045 (GPEIFQAYDP…RGGQRLLTTD (471 aa)) form an interaction with COL6A2 region. The segment at 632-1451 (RGGPAQDLTF…SETQTDAFVL (820 aa)) is interaction with COL5A1. Asn-686 and Asn-773 each carry an N-linked (GlcNAc...) asparagine glycan. CSPG repeat units lie at residues 784 to 883 (TVWM…FRVT) and 903 to 994 (NAPV…FVAT). Ser-1000 carries O-linked (Xyl...) (chondroitin sulfate) serine glycosylation. 9 CSPG repeats span residues 1023–1115 (APVQ…VSDG), 1131–1221 (YLHV…FSVA), 1243–1342 (PLQL…LDVA), 1361–1454 (TVIP…LLAN), 1478–1568 (PPVL…LSDG), 1586–1684 (LLSL…LLLS), 1709–1808 (PSRL…FRAH), 1837–1929 (PPQP…MSDG), and 1946–2034 (TIEV…VVAL). Asn-1136 and Asn-1207 each carry an N-linked (GlcNAc...) asparagine glycan. N-linked (GlcNAc...) asparagine glycosylation is found at Asn-1369 and Asn-1454. Residues 1591-2226 (GTRKLTVCPE…GGFLGFLEAN (636 aa)) form a neurite growth inhibition region. Positions 1592 to 2226 (TRKLTVCPES…GGFLGFLEAN (635 aa)) are cysteine-containing. Asn-1650 is a glycosylation site (N-linked (GlcNAc...) asparagine). N-linked (GlcNAc...) asparagine glycans are attached at residues Asn-1914, Asn-2021, Asn-2039, Asn-2045, and Asn-2080. Residues 2043 to 2152 (TVNVTVQALL…AGDRLTLELW (110 aa)) form a CSPG 15 repeat. The interval 2190–2210 (ETEKPGRSVPTGQPGQAASSP) is disordered. Polar residues predominate over residues 2199–2210 (PTGQPGQAASSP). A helical transmembrane segment spans residues 2230 to 2250 (IIIPVCLILLLLALILPLLFY). Over 2251–2327 (LRKRNKTGKH…PALRNGQYWV (77 aa)) the chain is Cytoplasmic. Thr-2257 bears the Phosphothreonine; by PKC/PRKCA mark. Positions 2325–2327 (YWV) match the PDZ-binding motif.

Interacts with ITGA4 through its chondroitin sulfate glycosaminoglycan. Interacts with BCAR1, CDC42 and ACK1. Interacts with MMP16. Interacts with the first PDZ domain of MPDZ. Interacts with PRKCA. Interacts with LGALS3 and the integrin composed of ITGB1 and ITGA3. Binds TNC, laminin-1, COL5A1 and COL6A2. Interacts with PLG and angiostatin. Binds FGF2 and PDGFA. Interacts with GRIP1, GRIP2 and GRIA2. Forms a ternary complex with GRIP1 and GRIA2. O-glycosylated; contains glycosaminoglycan chondroitin sulfate which are required for proper localization and function in stress fiber formation. Involved in interaction with MMP16 and ITGA4. In terms of processing, phosphorylation by PRKCA regulates its subcellular location and function in cell motility. In terms of tissue distribution, expressed in microcascular pericytes and not endothelial cells.

The protein localises to the cell membrane. It localises to the apical cell membrane. The protein resides in the cell projection. Its subcellular location is the lamellipodium membrane. It is found in the cell surface. In terms of biological role, proteoglycan playing a role in cell proliferation and migration which stimulates endothelial cells motility during microvascular morphogenesis. May also inhibit neurite outgrowth and growth cone collapse during axon regeneration. Cell surface receptor for collagen alpha 2(VI) which may confer cells ability to migrate on that substrate. Binds through its extracellular N-terminus growth factors, extracellular matrix proteases modulating their activity. May regulate MPP16-dependent degradation and invasion of type I collagen participating in melanoma cells invasion properties. May modulate the plasminogen system by enhancing plasminogen activation and inhibiting angiostatin. Also functions as a signal transducing protein by binding through its cytoplasmic C-terminus scaffolding and signaling proteins. May promote retraction fiber formation and cell polarization through Rho GTPase activation. May stimulate alpha-4, beta-1 integrin-mediated adhesion and spreading by recruiting and activating a signaling cascade through CDC42, ACK1 and BCAR1. May activate FAK and ERK1/ERK2 signaling cascades. This chain is Chondroitin sulfate proteoglycan 4 (Cspg4), found in Mus musculus (Mouse).